Consider the following 110-residue polypeptide: MNNAAKRADCWFGAKNYGRAVYECLRGGLYFTKDDENVNSQPFMRWRDRFLFCAEAVYKAQAETGGIKGHYLNATAGTCEEMIKRAVFARELGVPIVMHDYLNRGIHRKY.

Belongs to the RuBisCO large chain family.

The protein resides in the mitochondrion. This is an uncharacterized protein from Arabidopsis thaliana (Mouse-ear cress).